The sequence spans 574 residues: MTIEFSNFSFRYESLDKPTLRNINLRIEKGEKIVIIGPSGSGKSTLGQCLNGLIPHAIKGEVSGSLTINGQETATFAMHQFTEQVGTVLQDTDSQFVGLSIGEDIAFALENQLTANIEMYSLVKATAKMVDLEQMLQRSPHDLSGGQKQRVSLAGILVDDVDILLFDEPLAALDPKTGKRTIEIIDDLHRKTGKTVVIIEHRLEDVLHRHVDRIILMDGGEIIADTTPDELLASPLLAQYGIREPLYLTALKSAGCHLALDDHPSSLSELPLANYQHAMADWFHQANTTSNHIRSETLLDVRNLTYSYDGEKNALEGVSFNVQRGEFVSILGKNGSGKSTITKLIMGVIEPDDGTMHLNGQDLSELTIFERSQKVGVVMQNPNHMISHHMIFDEVAFGLRNRGWDEQQVNDKVLEALELCGLSKYRHWPIEALSYGQKKRVTIASILALEPELLMLDEPTAGQDYRNYTSMLSFIEKLNRELGITVVIISHDMHLVLEYTTRSIVIADSQLVADAPMTDVFSNPALLDRANLTTTSLYELATRLNMAETNAFMQHFIDVEKASRLEKTVERNVA.

ABC transporter domains follow at residues Ile-3–Glu-244 and Leu-299–Thr-533. ATP is bound by residues Gly-37–Ser-44 and Gly-332–Ser-339.

Belongs to the ABC transporter superfamily.

The protein localises to the cell inner membrane. In terms of biological role, probably part of an ABC transporter complex. Responsible for energy coupling to the transport system. This is Putative ABC transporter ATP-binding protein VVA0347 from Vibrio vulnificus (strain YJ016).